The primary structure comprises 440 residues: Proline--tRNA ligase (440 aa).

The protein belongs to the class-II aminoacyl-tRNA synthetase family. ProS type 2 subfamily. Homodimer.

It localises to the cytoplasm. It carries out the reaction tRNA(Pro) + L-proline + ATP = L-prolyl-tRNA(Pro) + AMP + diphosphate. Its function is as follows. Catalyzes the attachment of proline to tRNA(Pro) in a two-step reaction: proline is first activated by ATP to form Pro-AMP and then transferred to the acceptor end of tRNA(Pro). In Rhizobium etli (strain ATCC 51251 / DSM 11541 / JCM 21823 / NBRC 15573 / CFN 42), this protein is Proline--tRNA ligase.